Consider the following 54-residue polypeptide: Ovomucoid (54 aa).

Positions 4-54 constitute a Kazal-like domain; it reads VDCSEYPKPACTMEHRPLCGSDNQTYDNKCNFCNAVVESNGTLTLSHFGKC. 3 cysteine pairs are disulfide-bonded: Cys-6–Cys-36, Cys-14–Cys-33, and Cys-22–Cys-54. N-linked (GlcNAc...) asparagine glycosylation occurs at Asn-43.

Its subcellular location is the secreted. The polypeptide is Ovomucoid (Guttera pucherani (Eastern crested guineafowl)).